The sequence spans 359 residues: 3-dehydroquinate synthase (359 aa).

Residues 70-75 (DGEQYK), 105-109 (GVIGD), 129-130 (TT), Lys-142, Lys-151, and 169-172 (FYKT) each bind NAD(+). The Zn(2+) site is built by Glu-184, His-247, and His-264.

This sequence belongs to the sugar phosphate cyclases superfamily. Dehydroquinate synthase family. It depends on Co(2+) as a cofactor. Zn(2+) is required as a cofactor. The cofactor is NAD(+).

The protein resides in the cytoplasm. The catalysed reaction is 7-phospho-2-dehydro-3-deoxy-D-arabino-heptonate = 3-dehydroquinate + phosphate. Its pathway is metabolic intermediate biosynthesis; chorismate biosynthesis; chorismate from D-erythrose 4-phosphate and phosphoenolpyruvate: step 2/7. Its function is as follows. Catalyzes the conversion of 3-deoxy-D-arabino-heptulosonate 7-phosphate (DAHP) to dehydroquinate (DHQ). The polypeptide is 3-dehydroquinate synthase (Francisella tularensis subsp. holarctica (strain OSU18)).